We begin with the raw amino-acid sequence, 652 residues long: DNA ligase (652 aa).

NAD(+) contacts are provided by residues aspartate 29–aspartate 33, serine 78–leucine 79, and glutamate 107. Lysine 109 (N6-AMP-lysine intermediate) is an active-site residue. Residues arginine 130, glutamate 164, lysine 278, and lysine 302 each coordinate NAD(+). Zn(2+) contacts are provided by cysteine 395, cysteine 398, cysteine 413, and cysteine 418. Residues aspartate 577 to leucine 652 enclose the BRCT domain.

Belongs to the NAD-dependent DNA ligase family. LigA subfamily. The cofactor is Mg(2+). Mn(2+) serves as cofactor.

The catalysed reaction is NAD(+) + (deoxyribonucleotide)n-3'-hydroxyl + 5'-phospho-(deoxyribonucleotide)m = (deoxyribonucleotide)n+m + AMP + beta-nicotinamide D-nucleotide.. Functionally, DNA ligase that catalyzes the formation of phosphodiester linkages between 5'-phosphoryl and 3'-hydroxyl groups in double-stranded DNA using NAD as a coenzyme and as the energy source for the reaction. It is essential for DNA replication and repair of damaged DNA. This Streptococcus suis (strain 98HAH33) protein is DNA ligase.